The following is a 322-amino-acid chain: Digestive cysteine proteinase 1 (322 aa).

An N-terminal signal peptide occupies residues 1–16 (MKVVALFLFGLALAAA). Residues 17–105 (NPSWEEFKGK…VFTSTDAAPE (89 aa)) constitute a propeptide, activation peptide. 3 cysteine pairs are disulfide-bonded: cysteine 126–cysteine 170, cysteine 160–cysteine 203, and cysteine 262–cysteine 311. Residue cysteine 129 is part of the active site. Residues histidine 269 and asparagine 289 contribute to the active site.

It belongs to the peptidase C1 family.

With respect to regulation, inhibited by E-64, antipain, leupeptin, heavy metal ions, iodoacetic acid, dithionitrobenzene, p-hydroxymercuri-benzoate; activated by mercaptoethanol and dithiothreitol. This is Digestive cysteine proteinase 1 (LCP1) from Homarus americanus (American lobster).